An 816-amino-acid polypeptide reads, in one-letter code: Protein hunchback (816 aa).

Disordered stretches follow at residues 33–92 (LSHH…QPMD), 129–151 (QQHF…GGFN), 165–185 (YYGG…PTAV), and 197–229 (ALTP…LMSN). 3 stretches are compositionally biased toward low complexity: residues 49–60 (SNSNSGASSPRQ), 79–89 (QQQQQQQQQQQ), and 129–139 (QQHFQAAQHQQ). Position 199 is a phosphothreonine (T199). S209, S228, S230, and S231 each carry phosphoserine. Over residues 219–229 (EPEKEHDLMSN) the composition is skewed to basic and acidic residues. 4 C2H2-type zinc fingers span residues 261–283 (YKCK…TRTH), 290–312 (LQCA…IRKH), 318–340 (FQCD…RKSH), and 346–364 (YRCA…FKLH). Disordered regions lie at residues 387 to 427 (VIDV…QQQQ), 536 to 612 (LQQQ…QLPH), and 679 to 734 (GSSA…SNPT). Composition is skewed to low complexity over residues 399–427 (SKSF…QQQQ) and 536–560 (LQQQ…QQQQ). Residues 567 to 578 (NEEDEEEEEHED) are compositionally biased toward acidic residues. 2 positions are modified to phosphoserine: S584 and S587. Low complexity predominate over residues 712 to 734 (SASSTASSSGNSSNASSSTSNPT). 2 C2H2-type zinc fingers span residues 763 to 785 (YECK…MGYH) and 791 to 815 (FKCN…RNAH).

This sequence belongs to the hunchback C2H2-type zinc-finger protein family.

The protein localises to the nucleus. In terms of biological role, gap class segmentation protein that controls development of head structures. This is Protein hunchback from Drosophila virilis (Fruit fly).